Here is a 142-residue protein sequence, read N- to C-terminus: Immunity protein WapI (142 aa).

In terms of biological role, immunity protein component of a toxin-immunity protein module, which functions as a cellular contact-dependent growth inhibition (CDI) system. Neutralizes the tRNase activity of cognate toxin WapA upon expression in E.coli. Does not inhibit WapA from other strains of B.subtilis. The WapA C-terminus cannot be expressed on its own in E.coli, however it can be cloned in the presence of its cognate immunity protein gene. Cell contact is necessary for growth inhibition. Unlike the LXG toxin-immunity modules, WapAI mediates competition under shaking culture conditions. The polypeptide is Immunity protein WapI (wapI) (Bacillus subtilis (strain 168)).